Reading from the N-terminus, the 346-residue chain is NADH-ubiquinone oxidoreductase chain 2 (346 aa).

Transmembrane regions (helical) follow at residues 1 to 21 (MNPH…TITI), 25 to 45 (HWVL…PLIS), 60 to 80 (FLTQ…NAWA), 95 to 115 (CLLL…HFWF), 124 to 144 (LMTA…LLLM), 149 to 169 (LNPA…GWMG), 178 to 195 (ILAF…IILV), 200 to 219 (LALL…FMAL), 242 to 262 (ATLM…GFMP), 274 to 294 (EMTP…FFYL), and 326 to 346 (AILA…HAIV).

It belongs to the complex I subunit 2 family.

It localises to the mitochondrion inner membrane. It catalyses the reaction a ubiquinone + NADH + 5 H(+)(in) = a ubiquinol + NAD(+) + 4 H(+)(out). Its function is as follows. Core subunit of the mitochondrial membrane respiratory chain NADH dehydrogenase (Complex I) that is believed to belong to the minimal assembly required for catalysis. Complex I functions in the transfer of electrons from NADH to the respiratory chain. The immediate electron acceptor for the enzyme is believed to be ubiquinone. The protein is NADH-ubiquinone oxidoreductase chain 2 (MT-ND2) of Sibirionetta formosa (Baikal teal).